We begin with the raw amino-acid sequence, 319 residues long: Ribosomal RNA large subunit methyltransferase F (319 aa).

The disordered stretch occupies residues 1 to 25 (MAPFFSAMTSKKQSQGLPKGPHPDN). Residues 7–16 (AMTSKKQSQG) are compositionally biased toward polar residues.

Belongs to the methyltransferase superfamily. METTL16/RlmF family.

The protein resides in the cytoplasm. It catalyses the reaction adenosine(1618) in 23S rRNA + S-adenosyl-L-methionine = N(6)-methyladenosine(1618) in 23S rRNA + S-adenosyl-L-homocysteine + H(+). Functionally, specifically methylates the adenine in position 1618 of 23S rRNA. This Shewanella amazonensis (strain ATCC BAA-1098 / SB2B) protein is Ribosomal RNA large subunit methyltransferase F.